Reading from the N-terminus, the 597-residue chain is MHRYRTHTCGDLREAQADETTRLSGWCHRIRDHGGVLFIDLRDHYGITQCVVDPDSKAFPLAEKLRSEWVVRIDGLVRKRPSGTENPEMPTGFIEIYVTEIEVLGAAAELPMPVFGDIDYPEDIRLKYRFLDLRREKLHKNIMLRGQVIDSLRRRMKEQGFFEFQTPILTASSPEGARDFLVPSRIHAGKFYALPQAPQQYKQLLMMAGFDRYFQIAPCFRDEDPRADRLPGEFYQLDVEMSFITQEDVFAAMEPVIRGAFEEFGNGQPVTQTFPRIPYAEAMLKYGSDKPDLRNPLVIADVTDLFARDDVSFNAFKNVIKKGGVVRAIPATGAASQPRSFFDKLNDWAKSEGAAGLGYVIFEGSDEAPVGKGPIAKFLPAEVQAAIVTRADLKAGDAVFFACDIEEKAAKLAGAARLRIGHELGLSKTGVFELCWIVDFPMYEWNEDDKTVDFSHNPFSMPQGGLEALQTQDPLTIKAFQYDIACNGYEIASGGIRNHRPEAMVKAFEIAGYGEETVVERFGGMYRAFQYGAPPHGGMAAGVDRIIMLLAGVQNLREISLFPMNQKAEDLLMGAPSEATTKQLRELHIRLNLPEPK.

L-aspartate is bound at residue Glu175. An aspartate region spans residues Gln199 to Lys202. Residues Arg221 and His456 each coordinate L-aspartate. ATP is bound at residue Arg221–Glu223. Glu490 is a binding site for ATP. Arg497 is an L-aspartate binding site. Gly542–Arg545 is a binding site for ATP.

This sequence belongs to the class-II aminoacyl-tRNA synthetase family. Type 1 subfamily. In terms of assembly, homodimer.

The protein resides in the cytoplasm. It catalyses the reaction tRNA(Asx) + L-aspartate + ATP = L-aspartyl-tRNA(Asx) + AMP + diphosphate. Functionally, aspartyl-tRNA synthetase with relaxed tRNA specificity since it is able to aspartylate not only its cognate tRNA(Asp) but also tRNA(Asn). Reaction proceeds in two steps: L-aspartate is first activated by ATP to form Asp-AMP and then transferred to the acceptor end of tRNA(Asp/Asn). The protein is Aspartate--tRNA(Asp/Asn) ligase of Beijerinckia indica subsp. indica (strain ATCC 9039 / DSM 1715 / NCIMB 8712).